The chain runs to 122 residues: Large ribosomal subunit protein uL14 (122 aa).

The protein belongs to the universal ribosomal protein uL14 family. Part of the 50S ribosomal subunit. Forms a cluster with proteins L3 and L19. In the 70S ribosome, L14 and L19 interact and together make contacts with the 16S rRNA in bridges B5 and B8.

Binds to 23S rRNA. Forms part of two intersubunit bridges in the 70S ribosome. This is Large ribosomal subunit protein uL14 from Polynucleobacter necessarius subsp. necessarius (strain STIR1).